Consider the following 860-residue polypeptide: Alanine--tRNA ligase (860 aa).

Zn(2+) is bound by residues His553, His557, Cys655, and His659.

It belongs to the class-II aminoacyl-tRNA synthetase family. Zn(2+) is required as a cofactor.

The protein localises to the cytoplasm. It catalyses the reaction tRNA(Ala) + L-alanine + ATP = L-alanyl-tRNA(Ala) + AMP + diphosphate. Its function is as follows. Catalyzes the attachment of alanine to tRNA(Ala) in a two-step reaction: alanine is first activated by ATP to form Ala-AMP and then transferred to the acceptor end of tRNA(Ala). Also edits incorrectly charged Ser-tRNA(Ala) and Gly-tRNA(Ala) via its editing domain. This chain is Alanine--tRNA ligase, found in Legionella pneumophila (strain Paris).